A 636-amino-acid chain; its full sequence is Translation factor GUF1, mitochondrial (636 aa).

The tr-type G domain occupies 35–218 (SNYRNFSIVA…AIIRDIPGPR (184 aa)). Residues 44–51 (AHVDHGKS), 111–115 (DTPGH), and 165–168 (NKID) each bind GTP.

The protein belongs to the TRAFAC class translation factor GTPase superfamily. Classic translation factor GTPase family. LepA subfamily.

Its subcellular location is the mitochondrion inner membrane. The catalysed reaction is GTP + H2O = GDP + phosphate + H(+). Promotes mitochondrial protein synthesis. May act as a fidelity factor of the translation reaction, by catalyzing a one-codon backward translocation of tRNAs on improperly translocated ribosomes. Binds to mitochondrial ribosomes in a GTP-dependent manner. The protein is Translation factor GUF1, mitochondrial of Debaryomyces hansenii (strain ATCC 36239 / CBS 767 / BCRC 21394 / JCM 1990 / NBRC 0083 / IGC 2968) (Yeast).